Here is a 96-residue protein sequence, read N- to C-terminus: Putative septation protein SpoVG (96 aa).

The protein belongs to the SpoVG family.

Functionally, could be involved in septation. The polypeptide is Putative septation protein SpoVG (Clostridium kluyveri (strain ATCC 8527 / DSM 555 / NBRC 12016 / NCIMB 10680 / K1)).